The primary structure comprises 140 residues: Small ribosomal subunit protein uS19 (140 aa).

A disordered region spans residues 120–140; that stretch reads RPKHSAPGIGATRSSAHVSKK. Over residues 131–140 the composition is skewed to polar residues; sequence TRSSAHVSKK.

This sequence belongs to the universal ribosomal protein uS19 family.

Protein S19 forms a complex with S13 that binds strongly to the 16S ribosomal RNA. In Nanoarchaeum equitans (strain Kin4-M), this protein is Small ribosomal subunit protein uS19.